A 780-amino-acid chain; its full sequence is Heat shock protein 90-5, chloroplastic (780 aa).

Residues 1–60 (MAPALSRSLYTSPLTSVPITPVSSRLSHLRSSFLPHGGALRTGVSCSWNLEKRCNRFAVK) constitute a chloroplast transit peptide. ATP contacts are provided by residues E106, N110, D152, M157, 172-173 (SG), 196-201 (QFGVGF), T251, and R441. The tract at residues 742-780 (GRVEEEEESSTVNEGDDKSGETEVVEPSEVRAESDPWQD) is disordered. Residues 769–780 (SEVRAESDPWQD) show a composition bias toward basic and acidic residues.

Belongs to the heat shock protein 90 family. As to quaternary structure, homodimer. Interacts with VIPP1. Interacts with P23-1. In terms of tissue distribution, expressed in roots, cotyledons, young leaves, mature leaves, stems, flowers, petals and siliques.

It localises to the plastid. The protein resides in the chloroplast stroma. Functionally, molecular chaperone required for chloroplast biogenesis. Essential for chloroplast biogenesis and maintenance, and thus for embryogenesis. May be involved in the disassembly of VIPP1 for thylakoid membrane formation and/or maintenance. Cooperates with TIC components and other molecular chaperones to drive transport of preproteins into chloroplasts and functions in the chloroplast stroma to facilitate membrane translocation during protein import into the organelle. This is Heat shock protein 90-5, chloroplastic from Arabidopsis thaliana (Mouse-ear cress).